The chain runs to 150 residues: SsrA-binding protein (150 aa).

It belongs to the SmpB family.

The protein resides in the cytoplasm. Required for rescue of stalled ribosomes mediated by trans-translation. Binds to transfer-messenger RNA (tmRNA), required for stable association of tmRNA with ribosomes. tmRNA and SmpB together mimic tRNA shape, replacing the anticodon stem-loop with SmpB. tmRNA is encoded by the ssrA gene; the 2 termini fold to resemble tRNA(Ala) and it encodes a 'tag peptide', a short internal open reading frame. During trans-translation Ala-aminoacylated tmRNA acts like a tRNA, entering the A-site of stalled ribosomes, displacing the stalled mRNA. The ribosome then switches to translate the ORF on the tmRNA; the nascent peptide is terminated with the 'tag peptide' encoded by the tmRNA and targeted for degradation. The ribosome is freed to recommence translation, which seems to be the essential function of trans-translation. This is SsrA-binding protein from Polynucleobacter asymbioticus (strain DSM 18221 / CIP 109841 / QLW-P1DMWA-1) (Polynucleobacter necessarius subsp. asymbioticus).